A 215-amino-acid polypeptide reads, in one-letter code: Heart- and neural crest derivatives-expressed protein 1 (215 aa).

2 disordered regions span residues 53 to 109 (APDF…RTES) and 169 to 202 (VDGGRESKRKRELQQHEGFPPALGPGEKRIKGRT). Positions 65 to 75 (AAAAAATYGPD) are enriched in low complexity. Residues 92–104 (LGRRKGSGPKKER) show a composition bias toward basic residues. One can recognise a bHLH domain in the interval 94–146 (RRKGSGPKKERRRTESINSAFAELRECIPNVPADTKLSKIKTLRLATSYIAYL). A Phosphothreonine; by PLK4 modification is found at T107. A Phosphoserine; by PLK4 modification is found at S109.

In terms of assembly, efficient DNA binding requires dimerization with another bHLH protein. Forms homodimers and heterodimers with TCF3 gene products E12 and E47, HAND2 and HEY1, HEY2 and HEYL (hairy-related transcription factors). Interacts with MDFIC. Interacts with SOX15; the interaction enhances HAND1-induced differentiation of trophoblast giant cells. Phosphorylation by PLK4 disrupts the interaction with MDFIC and leads to translocation into the nucleoplasm, allowing dimerization and transcription factor activity.

The protein localises to the nucleus. It is found in the nucleoplasm. The protein resides in the nucleolus. Functionally, transcription factor that plays an essential role in both trophoblast giant cell differentiation and in cardiac morphogenesis. Binds the DNA sequence 5'-NRTCTG-3' (non-canonical E-box). Acts as a transcriptional repressor of SOX15. In the adult, could be required for ongoing expression of cardiac-specific genes. This is Heart- and neural crest derivatives-expressed protein 1 (HAND1) from Oryctolagus cuniculus (Rabbit).